A 237-amino-acid chain; its full sequence is Sugar fermentation stimulation protein homolog (237 aa).

It belongs to the SfsA family.

The polypeptide is Sugar fermentation stimulation protein homolog (Azorhizobium caulinodans (strain ATCC 43989 / DSM 5975 / JCM 20966 / LMG 6465 / NBRC 14845 / NCIMB 13405 / ORS 571)).